A 330-amino-acid chain; its full sequence is Phenylalanine--tRNA ligase alpha subunit (330 aa).

Glutamate 255 is a binding site for Mg(2+).

The protein belongs to the class-II aminoacyl-tRNA synthetase family. Phe-tRNA synthetase alpha subunit type 1 subfamily. As to quaternary structure, tetramer of two alpha and two beta subunits. Mg(2+) is required as a cofactor.

Its subcellular location is the cytoplasm. The enzyme catalyses tRNA(Phe) + L-phenylalanine + ATP = L-phenylalanyl-tRNA(Phe) + AMP + diphosphate + H(+). The chain is Phenylalanine--tRNA ligase alpha subunit from Acinetobacter baylyi (strain ATCC 33305 / BD413 / ADP1).